Here is a 394-residue protein sequence, read N- to C-terminus: 1-deoxy-D-xylulose 5-phosphate reductoisomerase (394 aa).

6 residues coordinate NADPH: T6, G7, S8, I9, A32, and N124. Position 125 (K125) interacts with 1-deoxy-D-xylulose 5-phosphate. E126 serves as a coordination point for NADPH. D148 is a binding site for Mn(2+). The 1-deoxy-D-xylulose 5-phosphate site is built by S149, E150, S174, and H197. Position 150 (E150) interacts with Mn(2+). G203 is a binding site for NADPH. Residues S210, N215, K216, and E219 each coordinate 1-deoxy-D-xylulose 5-phosphate. Position 219 (E219) interacts with Mn(2+).

It belongs to the DXR family. Requires Mg(2+) as cofactor. The cofactor is Mn(2+).

The catalysed reaction is 2-C-methyl-D-erythritol 4-phosphate + NADP(+) = 1-deoxy-D-xylulose 5-phosphate + NADPH + H(+). Its pathway is isoprenoid biosynthesis; isopentenyl diphosphate biosynthesis via DXP pathway; isopentenyl diphosphate from 1-deoxy-D-xylulose 5-phosphate: step 1/6. Catalyzes the NADPH-dependent rearrangement and reduction of 1-deoxy-D-xylulose-5-phosphate (DXP) to 2-C-methyl-D-erythritol 4-phosphate (MEP). This is 1-deoxy-D-xylulose 5-phosphate reductoisomerase from Streptomyces avermitilis (strain ATCC 31267 / DSM 46492 / JCM 5070 / NBRC 14893 / NCIMB 12804 / NRRL 8165 / MA-4680).